We begin with the raw amino-acid sequence, 556 residues long: MSVSAFNRRWAAVILEALTRHGVRHVCIAPGSRSTPLTLAAAENPAFIHHTHFDERGLGHLALGLAKVSQQPVAVIVTSGTAVANLYPALIEAGLTGEKLILLTADRPPELIDCGANQAIRQAGMFASHPSQTLSLPRPTQDIPARWLVSTIDNALAMLHAGALHINCPFAEPLYGDMNDTGLVWQQRLGDWWQDEKPWLREARRLESDKQRDWFFWRQKRGVVVAGRMSAEEGKKVAQWAQTLGWPLIGDVLSQTGQPLPCADLWLGNAKAVTELQQAQIVVQLGSSLTGKRLLQWQATCEPEEYWVIDNIEGRLDPAHHRGRRLVAKIADWLELHPAEKRKPWCVEIPRLAELAWQRVVAQRDTFGEAQLAHRIRDYLPEQGQLFVGNSLVVRLIDALSQLPAGYPVYSNRGASGIDGLLSTAAGVQRASAKSTLAIVGDLSALYDLNALALLRQVSAPFVLIVVNNNGGQIFSLLPTPQSKRERFYLMPQNVHFDHAAAMFNLRYHRPENWEELESALAGAWRTPATTVIELVVNDTDGAQTLQQLLAQVSHL.

This sequence belongs to the TPP enzyme family. MenD subfamily. As to quaternary structure, homodimer. It depends on Mg(2+) as a cofactor. Requires Mn(2+) as cofactor. Thiamine diphosphate serves as cofactor.

The enzyme catalyses isochorismate + 2-oxoglutarate + H(+) = 5-enolpyruvoyl-6-hydroxy-2-succinyl-cyclohex-3-ene-1-carboxylate + CO2. It functions in the pathway quinol/quinone metabolism; 1,4-dihydroxy-2-naphthoate biosynthesis; 1,4-dihydroxy-2-naphthoate from chorismate: step 2/7. The protein operates within quinol/quinone metabolism; menaquinone biosynthesis. Its function is as follows. Catalyzes the thiamine diphosphate-dependent decarboxylation of 2-oxoglutarate and the subsequent addition of the resulting succinic semialdehyde-thiamine pyrophosphate anion to isochorismate to yield 2-succinyl-5-enolpyruvyl-6-hydroxy-3-cyclohexene-1-carboxylate (SEPHCHC). The sequence is that of 2-succinyl-5-enolpyruvyl-6-hydroxy-3-cyclohexene-1-carboxylate synthase from Salmonella typhimurium (strain LT2 / SGSC1412 / ATCC 700720).